Reading from the N-terminus, the 164-residue chain is C-phycoerythrin alpha chain (164 aa).

Cysteine 82 and cysteine 139 together coordinate (2R,3E)-phycoerythrobilin.

This sequence belongs to the phycobiliprotein family. Heterodimer of an alpha and a beta chain. In terms of processing, contains two covalently linked bilin chromophores.

The protein localises to the cellular thylakoid membrane. Light-harvesting photosynthetic bile pigment-protein from the phycobiliprotein complex. In Synechocystis sp. (strain PCC 6701), this protein is C-phycoerythrin alpha chain (cpeA).